Reading from the N-terminus, the 79-residue chain is MVWQENEDLRKQLVEASELLKSQAKELKDAHQQQKLALQDFLELCELVAELCSQKQKVWDKEGEMEVAMQKVNTMWQES.

Residues 4–43 are a coiled coil; that stretch reads QENEDLRKQLVEASELLKSQAKELKDAHQQQKLALQDFLE.

This is an uncharacterized protein from Homo sapiens (Human).